The sequence spans 881 residues: Valine--tRNA ligase (881 aa).

The 'HIGH' region signature appears at 42–52 (PNITGDLHVGH). Residues 554–558 (KMSKS) carry the 'KMSKS' region motif. K557 contributes to the ATP binding site.

Belongs to the class-I aminoacyl-tRNA synthetase family. ValS type 1 subfamily. As to quaternary structure, monomer.

Its subcellular location is the cytoplasm. The catalysed reaction is tRNA(Val) + L-valine + ATP = L-valyl-tRNA(Val) + AMP + diphosphate. Its function is as follows. Catalyzes the attachment of valine to tRNA(Val). As ValRS can inadvertently accommodate and process structurally similar amino acids such as threonine, to avoid such errors, it has a 'posttransfer' editing activity that hydrolyzes mischarged Thr-tRNA(Val) in a tRNA-dependent manner. The sequence is that of Valine--tRNA ligase from Wigglesworthia glossinidia brevipalpis.